A 134-amino-acid polypeptide reads, in one-letter code: Histone-like protein Rv3852 (134 aa).

Residues Met1–Ser10 show a composition bias toward basic and acidic residues. The interval Met1–Gln68 is disordered. The span at Leu23–Pro48 shows a compositional bias: basic residues. The chain crosses the membrane as a helical span at residues Pro111–Ile128.

As to quaternary structure, homodimer in solution. Is probably able to self-associate in higher oligomers along the DNA molecules. Interacts with the N-terminal region of Wag31.

Its subcellular location is the cell inner membrane. Can interact directly in vitro with the compound agrimophol, a phloroglucinol from the A.pilosa plant, whose extracts have been used in traditional Chinese medicine to treat pulmonary infections. Interaction with agrimophol leads to disruption of Rv3852's DNA binding function. Functionally, binds DNA in vitro. It has been proposed that Rv3852 plays a role in nucleoid organization and may function as an anchorage to tether the DNA to the membrane. However, it was later shown that it has no influence on nucleoid shape or compaction. It plays no role in virulence and only a minor role in the control of transcription, and does not appear to function as a typical nucleoid-associated protein. In terms of biological role, interacts with Wag31, an important cell shape and cell wall integrity determinant, and facilitates the localization of Wag31 to the cell poles and the cell wall, thus enabling nascent peptidoglycan synthesis. The chain is Histone-like protein Rv3852 from Mycobacterium tuberculosis (strain ATCC 25618 / H37Rv).